Reading from the N-terminus, the 284-residue chain is Diaminopimelate epimerase (284 aa).

Substrate contacts are provided by N14 and N67. Residue C76 is the Proton donor of the active site. Substrate contacts are provided by residues 77–78 (GN), N166, N199, and 217–218 (ER). Catalysis depends on C226, which acts as the Proton acceptor. 227 to 228 (GT) provides a ligand contact to substrate.

Belongs to the diaminopimelate epimerase family. Homodimer.

It is found in the cytoplasm. The enzyme catalyses (2S,6S)-2,6-diaminopimelate = meso-2,6-diaminopimelate. It functions in the pathway amino-acid biosynthesis; L-lysine biosynthesis via DAP pathway; DL-2,6-diaminopimelate from LL-2,6-diaminopimelate: step 1/1. Catalyzes the stereoinversion of LL-2,6-diaminopimelate (L,L-DAP) to meso-diaminopimelate (meso-DAP), a precursor of L-lysine and an essential component of the bacterial peptidoglycan. This is Diaminopimelate epimerase from Geobacillus sp. (strain WCH70).